The primary structure comprises 361 residues: Basic helix-loop-helix protein 79 (361 aa).

The segment at 66–159 is disordered; it reads APEASNGSGS…ASTVTAGQKT (94 aa). Basic and acidic residues predominate over residues 124 to 138; the sequence is GRPERARPGAKKKAE. Over residues 146–157 the composition is skewed to polar residues; the sequence is PATSASTVTAGQ. Positions 166–173 match the Nuclear localization signal motif; sequence ARRGQATD. A basic motif; degenerate region spans residues 170-183; it reads QATDSHSLAERVRR. The bHLH domain occupies 170 to 220; the sequence is QATDSHSLAERVRRERISERMRYLQELVPGCNKVTGKAGMLDEIINYVQSL. The segment at 184–220 is helix-loop-helix motif; that stretch reads ERISERMRYLQELVPGCNKVTGKAGMLDEIINYVQSL.

This sequence belongs to the bHLH protein family. As to quaternary structure, homodimer. Interacts with IBH1.

The protein resides in the nucleus. Its function is as follows. Together with BCL1, positive regulator of cell elongation at least partially through increased gibberellic acid (GA) biosynthesis. This Oryza sativa subsp. indica (Rice) protein is Basic helix-loop-helix protein 79.